Reading from the N-terminus, the 453-residue chain is MITLKEALKYSKEELENLKKELNEKAKKEKKLGAYIEQFLDKDLSVSGEGVPVAIKDNISVKGWELTSASKILQGYIAPYDASAIVNLKANGFSPFGRCNMDEFAMGSSTASSCYGKTLNPLNFERVPGGSSGGSAAAVAGGLALASLGSDTGGSVRQPAAFCGCVGFKPSYGRVSRYGLASYSSSLDQIGVLTQNVEDAAILYDAIAGYDKMDSTSANIEFIKTVPNLNANKKLKIAVIENYVNDADSEVKNALLKTIDMLKANGHEIVYKNLLDSKFDIAAYYIIATAEASANLSRYDGVRYGKRSENIQNLKEMYVNTRSEGFGEEVKRRILLGTFVLSSGYYDAYYIKAQKARAFIKAKYEEILQDCDLIFMPVTPTTAFKFDTQKSPMQTYLEDVYTISVNLAGLGGISVPVAKDKEGLNISAQLICKAYDEQTLLDGALSLEQMIKN.

Catalysis depends on charge relay system residues K56 and S131. S155 acts as the Acyl-ester intermediate in catalysis.

The protein belongs to the amidase family. GatA subfamily. In terms of assembly, heterotrimer of A, B and C subunits.

The enzyme catalyses L-glutamyl-tRNA(Gln) + L-glutamine + ATP + H2O = L-glutaminyl-tRNA(Gln) + L-glutamate + ADP + phosphate + H(+). Allows the formation of correctly charged Gln-tRNA(Gln) through the transamidation of misacylated Glu-tRNA(Gln) in organisms which lack glutaminyl-tRNA synthetase. The reaction takes place in the presence of glutamine and ATP through an activated gamma-phospho-Glu-tRNA(Gln). The chain is Glutamyl-tRNA(Gln) amidotransferase subunit A (gatA) from Campylobacter jejuni subsp. jejuni serotype O:2 (strain ATCC 700819 / NCTC 11168).